Reading from the N-terminus, the 358-residue chain is NADH-quinone oxidoreductase subunit H (358 aa).

A run of 8 helical transmembrane segments spans residues Ile20–Ile40, Ala95–Ile115, Ile128–Gly148, Ile168–Met188, Val206–Val226, Gly253–Leu273, Trp290–Tyr310, and Val334–Leu354.

This sequence belongs to the complex I subunit 1 family. In terms of assembly, NDH-1 is composed of 14 different subunits. Subunits NuoA, H, J, K, L, M, N constitute the membrane sector of the complex.

It localises to the cell inner membrane. It catalyses the reaction a quinone + NADH + 5 H(+)(in) = a quinol + NAD(+) + 4 H(+)(out). Functionally, NDH-1 shuttles electrons from NADH, via FMN and iron-sulfur (Fe-S) centers, to quinones in the respiratory chain. The immediate electron acceptor for the enzyme in this species is believed to be ubiquinone. Couples the redox reaction to proton translocation (for every two electrons transferred, four hydrogen ions are translocated across the cytoplasmic membrane), and thus conserves the redox energy in a proton gradient. This subunit may bind ubiquinone. In Neisseria meningitidis serogroup A / serotype 4A (strain DSM 15465 / Z2491), this protein is NADH-quinone oxidoreductase subunit H.